A 278-amino-acid polypeptide reads, in one-letter code: MADS-box transcription factor PHERES 2 (278 aa).

An MADS-box domain is found at 1–60 (MKRKMKLSLIENSVSRKTTFTKRKKGMTKKLTELVTLCGVEACAVVYSPFNSIPEAWPSR).

In terms of assembly, interacts with AGL61/DIANA and AGL62. Male gametophyte, embryo and endosperm.

The protein resides in the nucleus. Probable transcription factor involved in the development of gametophytes and seeds. This is MADS-box transcription factor PHERES 2 (PHE2) from Arabidopsis thaliana (Mouse-ear cress).